Consider the following 1132-residue polypeptide: APC membrane recruitment protein 1 (1132 aa).

M1 carries the N-acetylmethionine modification. The span at 1–21 shows a compositional bias: polar residues; that stretch reads MESQQDEAVQTKGASTSSDAQ. Disordered regions lie at residues 1-256, 268-301, 338-423, 469-505, 674-699, 736-770, 924-949, and 1038-1132; these read MESQ…ACKN, FMQP…NPPN, SMTD…GEEN, GLGE…DSGE, TSGG…EPDW, MQEA…GNAT, ELQA…DSPL, and SQAS…NLAK. The segment covering 24–35 has biased composition (basic and acidic residues); that stretch reads GAEKGAKNKTTE. The span at 121-133 shows a compositional bias: low complexity; the sequence is SKSSAQFPSSQSA. Basic and acidic residues-rich tracts occupy residues 195-208, 218-229, and 281-290; these read KELE…HEHV, EIFRDTRKENAK, and EEPHTSETEG. Over residues 372-423 the composition is skewed to acidic residues; sequence ALPDDDDNDDEEEEEEEEEEEEEEEEEEEEEEEEEEEELLEDEEEVKDGEEN. Polar residues-rich tracts occupy residues 475–486 and 677–696; these read TPQSDQQESAPN and GSQT…SSSE. Composition is skewed to acidic residues over residues 756–765 and 931–941; these read EEPEEEEEEK and DSDEEGEEEEG. Polar residues-rich tracts occupy residues 1059–1072 and 1115–1132; these read SCSS…QSQA and ASLS…NLAK.

It belongs to the Amer family. In terms of assembly, interacts with CTNNB1, AXIN1, LRP6, KEAP1, APC and BTRC. Interacts with SCF (SKP1-CUL1-F-box protein) E3 ubiquitin-protein ligase complexes containing BTRC and/or FBXW11. Identified in the beta-catenin destruction complex containing CTNNB1, APC, AXIN1 and AXIN2. Interacts with WT1. Expressed in kidney.

It localises to the cytoplasm. The protein localises to the cell membrane. Its subcellular location is the nucleus. Functionally, regulator of the canonical Wnt signaling pathway. Acts by specifically binding phosphatidylinositol 4,5-bisphosphate (PtdIns(4,5)P2), translocating to the cell membrane and interacting with key regulators of the canonical Wnt signaling pathway, such as components of the beta-catenin destruction complex. Acts both as a positive and negative regulator of the Wnt signaling pathway, depending on the context: acts as a positive regulator by promoting LRP6 phosphorylation. Also acts as a negative regulator by acting as a scaffold protein for the beta-catenin destruction complex and promoting stabilization of Axin at the cell membrane. Promotes CTNNB1 ubiquitination and degradation. Involved in kidney development. The sequence is that of APC membrane recruitment protein 1 (Amer1) from Mus musculus (Mouse).